We begin with the raw amino-acid sequence, 405 residues long: Diaminohydroxyphosphoribosylamino-pyrimidine deaminase (405 aa).

The 128-residue stretch at 256–383 (YNHEEYMLKA…DLLKKAGIVV (128 aa)) folds into the CMP/dCMP-type deaminase domain. His305 is a binding site for Zn(2+). Glu307 functions as the Proton donor in the catalytic mechanism. Zn(2+)-binding residues include Cys335 and Cys345.

The protein belongs to the cytidine and deoxycytidylate deaminase family. Requires Zn(2+) as cofactor.

It localises to the cytoplasm. The protein localises to the nucleus. It carries out the reaction 2,5-diamino-6-hydroxy-4-(5-phosphoribosylamino)-pyrimidine + H2O + H(+) = 5-amino-6-(5-phospho-D-ribosylamino)uracil + NH4(+). The protein operates within cofactor biosynthesis; riboflavin biosynthesis; 5-amino-6-(D-ribitylamino)uracil from GTP: step 2/4. Functionally, involved in riboflavin biosynthesis. Converts 2,5-diamino-6-(ribosylamino)-4(3H)-pyrimidinone 5'-phosphate into 5-amino-6-(ribosylamino)-2,4(1H,3H)-pyrimidinedione 5'-phosphate. The chain is Diaminohydroxyphosphoribosylamino-pyrimidine deaminase from Schizosaccharomyces pombe (strain 972 / ATCC 24843) (Fission yeast).